The primary structure comprises 92 residues: Small ribosomal subunit protein uS19 (92 aa).

This sequence belongs to the universal ribosomal protein uS19 family.

Protein S19 forms a complex with S13 that binds strongly to the 16S ribosomal RNA. The protein is Small ribosomal subunit protein uS19 of Hyphomonas neptunium (strain ATCC 15444).